Consider the following 407-residue polypeptide: Protein arginine N-methyltransferase 2 (407 aa).

One can recognise an RMT2 domain in the interval 186–407 (TAADQATYLK…YYYHPEIRFA (222 aa)). S-adenosyl-L-methionine contacts are provided by residues Tyr-193, Met-223, 246 to 251 (FGMGII), 267 to 269 (EAH), 294 to 295 (WQ), and Asp-315.

Belongs to the class I-like SAM-binding methyltransferase superfamily. RMT2 methyltransferase family. In terms of assembly, monomer.

It is found in the cytoplasm. It localises to the nucleus. S-adenosyl-L-methionine-dependent protein-arginine N-methyltransferase that methylates the delta-nitrogen atom of arginine residues to form N5-methylarginine (type IV) in target proteins. Monomethylates ribosomal protein L12. In Kluyveromyces lactis (strain ATCC 8585 / CBS 2359 / DSM 70799 / NBRC 1267 / NRRL Y-1140 / WM37) (Yeast), this protein is Protein arginine N-methyltransferase 2.